Reading from the N-terminus, the 127-residue chain is MTIPEDLRYTKDHEWIKLLEDGSTALVGITDFAQHELGDIVFVELKSAGTVLKQHEVFGTVEAVKTVADLFAPVAGELLELNALLDSAEIVNQDPYNDGWLVKMKVASPEAVHALLDAEAYRQLTGE.

The Lipoyl-binding domain occupies 24 to 105 (TALVGITDFA…YNDGWLVKMK (82 aa)). An N6-lipoyllysine modification is found at Lys65.

It belongs to the GcvH family. As to quaternary structure, the glycine cleavage system is composed of four proteins: P, T, L and H. It depends on (R)-lipoate as a cofactor.

Functionally, the glycine cleavage system catalyzes the degradation of glycine. The H protein shuttles the methylamine group of glycine from the P protein to the T protein. The chain is Glycine cleavage system H protein from Pelodictyon phaeoclathratiforme (strain DSM 5477 / BU-1).